A 198-amino-acid chain; its full sequence is Thymidine kinase (198 aa).

ATP-binding positions include 9–16 (GTMNSGKS) and 85–88 (DEAQ). Catalysis depends on E86, which acts as the Proton acceptor. Residues C143, C146, C180, and H183 each contribute to the Zn(2+) site.

Belongs to the thymidine kinase family. In terms of assembly, homotetramer.

It localises to the cytoplasm. It catalyses the reaction thymidine + ATP = dTMP + ADP + H(+). The protein is Thymidine kinase of Streptococcus thermophilus (strain ATCC BAA-250 / LMG 18311).